Reading from the N-terminus, the 449-residue chain is MLNYTGLENKNVLVVGLAKSGYEAAKLLSKLGANVTVNDGKDLSQDAHAKDLESMGISVVSGSHPLTLLDNNPIIVKNPGIPYTVSIIDEAVKRGLKILTEVELSYLISEAPIIAVTGTNGKTTVTSLIGDMFKKSRLTGRLSGNIGYVASKVAQEVKPTDYLVTELSSFQLLGIEKYKPHIAIITNIYSAHLDYHENLENYQNAKKQIYKNQTEEDYLICNYHQRQVIESEELKAKTLYFSTQQEVDGIYIKDGFIIYKGVRIINTEDLVLPGEHNLENILAAVLACILAGVPIKAIIDSLTTFSGIEHRLQYVGTNRTNKYYNDSKATNTLATQFALNSFNQPIIWLCGGLDRGNEFDELIPYMENVRAMVVFGQTKAKFAKLGNSQGKSVIEANNVEDAVDKVQDIIEPNDVVLLSPACASWDQYSTFEERGEKFIERFRAHLPSY.

Position 118–124 (118–124 (GTNGKTT)) interacts with ATP.

This sequence belongs to the MurCDEF family.

It is found in the cytoplasm. It catalyses the reaction UDP-N-acetyl-alpha-D-muramoyl-L-alanine + D-glutamate + ATP = UDP-N-acetyl-alpha-D-muramoyl-L-alanyl-D-glutamate + ADP + phosphate + H(+). Its pathway is cell wall biogenesis; peptidoglycan biosynthesis. Cell wall formation. Catalyzes the addition of glutamate to the nucleotide precursor UDP-N-acetylmuramoyl-L-alanine (UMA). The protein is UDP-N-acetylmuramoylalanine--D-glutamate ligase of Staphylococcus aureus (strain MSSA476).